The sequence spans 345 residues: N-glycosylase/DNA lyase (345 aa).

DNA contacts are provided by N149, R154, and R204. K249 functions as the Schiff-base intermediate with DNA in the catalytic mechanism. P266 and D268 together coordinate 8-oxoguanine. DNA is bound by residues H270 and Q287. Residues Q315 and F319 each contribute to the 8-oxoguanine site. The segment covering 324–334 has biased composition (basic and acidic residues); it reads RQSRHAQEPPA. The disordered stretch occupies residues 324 to 345; sequence RQSRHAQEPPAKRRKGSKGPEG. Over residues 335-345 the composition is skewed to basic residues; sequence KRRKGSKGPEG.

The protein belongs to the type-1 OGG1 family. Ubiquitous.

The protein localises to the nucleus. Its subcellular location is the nucleoplasm. It localises to the nucleus speckle. The protein resides in the nucleus matrix. It is found in the mitochondrion. The enzyme catalyses 2'-deoxyribonucleotide-(2'-deoxyribose 5'-phosphate)-2'-deoxyribonucleotide-DNA = a 3'-end 2'-deoxyribonucleotide-(2,3-dehydro-2,3-deoxyribose 5'-phosphate)-DNA + a 5'-end 5'-phospho-2'-deoxyribonucleoside-DNA + H(+). Its function is as follows. DNA repair enzyme that incises DNA at 8-oxoG residues. Excises 7,8-dihydro-8-oxoguanine and 2,6-diamino-4-hydroxy-5-N-methylformamidopyrimidine (FAPY) from damaged DNA. Has a beta-lyase activity that nicks DNA 3' to the lesion. The polypeptide is N-glycosylase/DNA lyase (OGG1) (Homo sapiens (Human)).